A 596-amino-acid chain; its full sequence is Aspartate--tRNA(Asp/Asn) ligase (596 aa).

Glutamate 173 is a binding site for L-aspartate. Residues glutamine 197–lysine 200 form an aspartate region. Arginine 219 lines the L-aspartate pocket. ATP contacts are provided by residues arginine 219–glutamate 221 and glutamine 228. Histidine 450 is an L-aspartate binding site. Residue glutamate 485 participates in ATP binding. Arginine 492 provides a ligand contact to L-aspartate. Glycine 537–arginine 540 provides a ligand contact to ATP.

Belongs to the class-II aminoacyl-tRNA synthetase family. Type 1 subfamily. As to quaternary structure, homodimer.

The protein localises to the cytoplasm. It catalyses the reaction tRNA(Asx) + L-aspartate + ATP = L-aspartyl-tRNA(Asx) + AMP + diphosphate. In terms of biological role, aspartyl-tRNA synthetase with relaxed tRNA specificity since it is able to aspartylate not only its cognate tRNA(Asp) but also tRNA(Asn). Reaction proceeds in two steps: L-aspartate is first activated by ATP to form Asp-AMP and then transferred to the acceptor end of tRNA(Asp/Asn). The protein is Aspartate--tRNA(Asp/Asn) ligase of Hydrogenovibrio crunogenus (strain DSM 25203 / XCL-2) (Thiomicrospira crunogena).